A 67-amino-acid polypeptide reads, in one-letter code: Large ribosomal subunit protein uL29 (67 aa).

Belongs to the universal ribosomal protein uL29 family. In terms of assembly, part of the 50S ribosomal subunit. Contacts protein L23 and trigger factor when it is complexed with the ribosome.

Functionally, binds the 23S rRNA. One of the proteins that surrounds the polypeptide exit tunnel on the outside of the subunit. The chain is Large ribosomal subunit protein uL29 (rpmC) from Deinococcus radiodurans (strain ATCC 13939 / DSM 20539 / JCM 16871 / CCUG 27074 / LMG 4051 / NBRC 15346 / NCIMB 9279 / VKM B-1422 / R1).